The sequence spans 127 residues: Large ribosomal subunit protein bL17 (127 aa).

The protein belongs to the bacterial ribosomal protein bL17 family. In terms of assembly, part of the 50S ribosomal subunit. Contacts protein L32.

This chain is Large ribosomal subunit protein bL17, found in Actinobacillus pleuropneumoniae serotype 7 (strain AP76).